The following is a 253-amino-acid chain: 3-deoxy-manno-octulosonate cytidylyltransferase (253 aa).

This sequence belongs to the KdsB family.

It is found in the cytoplasm. The catalysed reaction is 3-deoxy-alpha-D-manno-oct-2-ulosonate + CTP = CMP-3-deoxy-beta-D-manno-octulosonate + diphosphate. The protein operates within nucleotide-sugar biosynthesis; CMP-3-deoxy-D-manno-octulosonate biosynthesis; CMP-3-deoxy-D-manno-octulosonate from 3-deoxy-D-manno-octulosonate and CTP: step 1/1. Its pathway is bacterial outer membrane biogenesis; lipopolysaccharide biosynthesis. Its function is as follows. Activates KDO (a required 8-carbon sugar) for incorporation into bacterial lipopolysaccharide in Gram-negative bacteria. The chain is 3-deoxy-manno-octulosonate cytidylyltransferase from Idiomarina loihiensis (strain ATCC BAA-735 / DSM 15497 / L2-TR).